The following is a 237-amino-acid chain: E3 ubiquitin-protein ligase RNF166 (237 aa).

Residues 33-73 (CPICLEVYHRPVAIGSCGHTFCGECLQPCLQVPSPLCPLCR) form an RING-type zinc finger. Cys98, Cys101, His113, and Cys117 together coordinate Zn(2+). Residues 98–117 (CRGCNKKVTLAKMRAHISSC) form a C2HC RNF-type zinc finger. A UIM domain is found at 221–237 (DEEAAFQAALALSLSEN).

It localises to the cytoplasm. It catalyses the reaction S-ubiquitinyl-[E2 ubiquitin-conjugating enzyme]-L-cysteine + [acceptor protein]-L-lysine = [E2 ubiquitin-conjugating enzyme]-L-cysteine + N(6)-ubiquitinyl-[acceptor protein]-L-lysine.. The protein operates within protein modification; protein ubiquitination. E3 ubiquitin-protein ligase that promotes the ubiquitination of different substrates. In turn, participates in different biological processes including interferon production or autophagy. Plays a role in the activation of RNA virus-induced interferon-beta production by promoting the ubiquitination of TRAF3 and TRAF6. Also plays a role in the early recruitment of autophagy adapters to bacteria. Mediates 'Lys-29' and 'Lys-33'-linked ubiquitination of SQSTM1 leading to xenophagic targeting of bacteria and inhibition of their replication. The protein is E3 ubiquitin-protein ligase RNF166 (Rnf166) of Mus musculus (Mouse).